The chain runs to 402 residues: Cysteine desulfurase NifS (402 aa).

Pyridoxal 5'-phosphate is bound by residues 72–73 (GT), Asn-151, Gln-179, and 199–201 (CGH). Residue Lys-202 is modified to N6-(pyridoxal phosphate)lysine. Residue Thr-237 participates in pyridoxal 5'-phosphate binding. The active-site Cysteine persulfide intermediate is the Cys-325. Residue Cys-325 participates in [2Fe-2S] cluster binding.

The protein belongs to the class-V pyridoxal-phosphate-dependent aminotransferase family. NifS/IscS subfamily. Homodimer. It depends on pyridoxal 5'-phosphate as a cofactor.

It catalyses the reaction (sulfur carrier)-H + L-cysteine = (sulfur carrier)-SH + L-alanine. Its activity is regulated as follows. Inhibited by equimolar concentrations of p-chloromercuribenzoic acid, iodoacetamide or N-ethylmaleimide. Its function is as follows. Catalyzes the removal of elemental sulfur atoms from cysteine to produce alanine. Seems to participate in the biosynthesis of the nitrogenase metalloclusters by providing the inorganic sulfur required for the Fe-S core formation. This Azotobacter vinelandii protein is Cysteine desulfurase NifS.